Reading from the N-terminus, the 622-residue chain is Mitochondrial Rho GTPase 2 (622 aa).

At 1 to 596 (MRRDVRILLL…ELHPTPFWLR (596 aa)) the chain is on the cytoplasmic side. In terms of domain architecture, Miro 1 spans 2-168 (RRDVRILLLG…FYYAQKAVLH (167 aa)). The GTP site is built by glycine 16, lysine 17, threonine 18, and serine 19. Mg(2+) is bound at residue threonine 18. Mg(2+) is bound at residue aspartate 57. Serine 59 provides a ligand contact to GTP. Lysine 96 is covalently cross-linked (Glycyl lysine isopeptide (Lys-Gly) (interchain with G-Cter in ubiquitin)). GTP is bound by residues asparagine 118, lysine 119, aspartate 121, alanine 149, and lysine 150. Lysine 119 is covalently cross-linked (Glycyl lysine isopeptide (Lys-Gly) (interchain with G-Cter in ubiquitin)). Lysine 164 participates in a covalent cross-link: Glycyl lysine isopeptide (Lys-Gly) (interchain with G-Cter in ubiquitin). EF-hand domains follow at residues 184–219 (ACAQALTRIFRLSDQDLDHALSDKELNAFQKSCFGH) and 304–339 (RGYQFVQRVFEKHDQDHDGVLSPTELESLFSVFSVA). 8 residues coordinate Ca(2+): aspartate 197, aspartate 199, aspartate 201, glutamate 208, aspartate 317, aspartate 319, aspartate 321, and glutamate 328. The Miro 2 domain maps to 415 to 580 (RSVLMCKVLG…FTQLATMATF (166 aa)). Glycine 427, glycine 429, lysine 430, serine 431, and alanine 432 together coordinate GTP. Position 431 (serine 431) interacts with Mg(2+). Glutamate 475 lines the Mg(2+) pocket. Residues lysine 529, aspartate 531, and cysteine 560 each coordinate GTP. A helical; Anchor for type IV membrane protein transmembrane segment spans residues 597 to 619 (GVLVAVGTAVAAVLSFSLYRVLV). Topologically, residues 620–622 (KSR) are mitochondrial intermembrane.

It belongs to the mitochondrial Rho GTPase family. In terms of assembly, homodimer. Interacts with the kinesin-binding proteins TRAK1/OIP106 and TRAK2/GRIF1, forming a link between mitochondria and the trafficking apparatus of the microtubules. Interacts with ARMCX3. Found in a complex with KIF5B, OGT, RHOT1 and TRAK1. Ubiquitinated by PRKN in a PINK1-dependent manner, leading to its degradation.

Its subcellular location is the mitochondrion outer membrane. The enzyme catalyses GTP + H2O = GDP + phosphate + H(+). The catalysed reaction is ATP + H2O = ADP + phosphate + H(+). It carries out the reaction UTP + H2O = UDP + phosphate + H(+). Its function is as follows. Atypical mitochondrial nucleoside-triphosphatase (NTPase) involved in mitochondrial trafficking. Probably involved in control of anterograde transport of mitochondria and their subcellular distribution. Can hydrolyze GTP, ATP and UTP. The protein is Mitochondrial Rho GTPase 2 (Rhot2) of Rattus norvegicus (Rat).